The sequence spans 234 residues: Uridylate kinase (234 aa).

Residues 8-11 (KLSG), Gly-51, and Arg-55 contribute to the ATP site. UMP-binding positions include Asp-68 and 129 to 136 (TSNPFFTT). ATP-binding residues include Thr-156, Tyr-162, and Asp-165.

It belongs to the UMP kinase family. As to quaternary structure, homohexamer.

It localises to the cytoplasm. It catalyses the reaction UMP + ATP = UDP + ADP. It participates in pyrimidine metabolism; CTP biosynthesis via de novo pathway; UDP from UMP (UMPK route): step 1/1. With respect to regulation, inhibited by UTP. Its function is as follows. Catalyzes the reversible phosphorylation of UMP to UDP. This is Uridylate kinase from Fervidobacterium nodosum (strain ATCC 35602 / DSM 5306 / Rt17-B1).